The sequence spans 2828 residues: Matrix-remodeling-associated protein 5 (2828 aa).

Positions 1-26 are cleaved as a signal peptide; the sequence is MPKRAHWGALSVVLILLWGHPRVALA. An LRRNT domain is found at 27–55; it reads CPHPCACYVPSEVHCTFRSLASVPAGIAK. 6 LRR repeats span residues 56 to 77, 80 to 101, 104 to 125, 128 to 149, 152 to 173, and 184 to 205; these read HVERINLGFNSIQALSETSFAG, KLELLMIHGNEIPSIPDGALRD, SLQVFKFSYNKLRVITGQTLQG, NLMRLHIDHNKIEFIHPQAFNG, SLRLLHLEGNLLHQLHPSTFST, and TIRHLYLAENMVRTLPASMLRN. The region spanning 217-277 is the LRRCT domain; sequence NPWTCDCEMR…HKLKDMTCLK (61 aa). N-linked (GlcNAc...) asparagine glycans are attached at residues Asn-287 and Asn-321. 2 Ig-like C2-type domains span residues 481-571 and 575-669; these read PSGA…YRVL and PSTQ…ITVT. 2 cysteine pairs are disulfide-bonded: Cys-501–Cys-555 and Cys-599–Cys-651. Asn-633 is a glycosylation site (N-linked (GlcNAc...) asparagine). 5 disordered regions span residues 671 to 715, 933 to 962, 1068 to 1190, 1204 to 1275, and 1367 to 1389; these read KGSG…RRLL, KPTHEETATEGWSAADVGSSPEPTSSEYEP, QGGN…APDI, AWVD…SSET, and EESSPVGFPGTPTWNPSRTAQPG. Over residues 695–708 the composition is skewed to acidic residues; that stretch reads IVEDEGGSGMGDEE. An O-linked (Xyl...) (chondroitin sulfate) serine glycan is attached at Ser-702. The span at 951-962 shows a compositional bias: low complexity; it reads SSPEPTSSEYEP. The span at 1090–1107 shows a compositional bias: polar residues; sequence SKSITLPDSTLGIMSSMS. A compositionally biased stretch (basic residues) spans 1146–1168; the sequence is PSRRRPNGRRRLRPNKFRHRHKQ. Composition is skewed to polar residues over residues 1169-1190 and 1204-1214; these read TPPTTFAPSETFSTQPTQAPDI and AWVDNTVNTPK. Residues 1229–1243 are compositionally biased toward basic residues; the sequence is TPRRKHGKRPNKHRY. Asn-1403 carries N-linked (GlcNAc...) asparagine glycosylation. The LRR 7 repeat unit spans residues 1410–1434; it reads LKELEDVDFTSEFLSSLTVSTPFHQ. Disordered regions lie at residues 1479 to 1499, 1536 to 1566, 1579 to 1603, 1669 to 1689, and 1700 to 1719; these read QNHTPTAARMKEPASSSPSTI, NPETEATPVNNEGTQHMSGPNELSTPSSDQD, QVFGSRSLPRGPDSQRQDGRVHASH, STTIPLPLHMSKPSIPSKFTD, and KVFGNNNIPEARNPVGKPPS. Polar residues predominate over residues 1542–1566; that stretch reads TPVNNEGTQHMSGPNELSTPSSDQD. Residue Asn-1735 is glycosylated (N-linked (GlcNAc...) asparagine). 10 consecutive Ig-like C2-type domains span residues 1853-1946, 1950-2041, 2046-2140, 2146-2239, 2242-2343, 2345-2432, 2440-2534, 2542-2630, 2637-2722, and 2733-2828; these read PQIL…LSVT, PQIL…IRLH, PPVI…LNVQ, ARIT…VDVV, PAKI…KVVT, PATI…KTVW, PKIN…LQLT, PIFH…RLVS, PEAN…PSVT, and PRIT…IHVF. Intrachain disulfides connect Cys-1875-Cys-1928 and Cys-1972-Cys-2025. N-linked (GlcNAc...) asparagine glycans are attached at residues Asn-2007 and Asn-2056. Cystine bridges form between Cys-2069–Cys-2122, Cys-2168–Cys-2221, Cys-2265–Cys-2324, Cys-2368–Cys-2418, Cys-2466–Cys-2518, Cys-2564–Cys-2616, Cys-2659–Cys-2711, and Cys-2755–Cys-2810. N-linked (GlcNAc...) asparagine glycosylation occurs at Asn-2693.

In terms of tissue distribution, detected in placenta (at protein level). Detected in cerebrospinal fluid and fibroblasts (at protein level). Highly expressed in kidney, also detected on liver and spleen. Expressed by proximal tubular cells of the kidney (at protein level). Expression highly increases during chronic kidney disease and autosomal dominant polycystic kidney disease, where is detected in cysts.

The protein localises to the secreted. Its function is as follows. In kidney, has anti-inflammatory and anti-fibrotic properties by limiting the induction of chemokines, fibronectin and collagen expression in response to TGB1 and pro-inflammatory stimuli. This is Matrix-remodeling-associated protein 5 (MXRA5) from Homo sapiens (Human).